The chain runs to 350 residues: L-serine dehydratase (350 aa).

Residue Lys-62 is modified to N6-(pyridoxal phosphate)lysine.

Belongs to the serine/threonine dehydratase family. Pyridoxal 5'-phosphate serves as cofactor.

The protein resides in the cytoplasm. The catalysed reaction is L-serine = pyruvate + NH4(+). It participates in carbohydrate biosynthesis; gluconeogenesis. The sequence is that of L-serine dehydratase (sds) from Dictyostelium discoideum (Social amoeba).